A 275-amino-acid chain; its full sequence is WIMGHMVNAIEQVDEFLNLGANAIEFDIDFDENGIAKYTHHGIPCDCGRLCTKSAVFTEYLDYVRQVTSPGDPKFRKELVLLALDLKLQRISSEKAYAAGVDVATKLLDHYWKRGWNGGRAYILLNIPLVEDYEFIKGFKDTLRKEGHEQYNAKVGINFTGNEDLDEIRKVLEKLGEDEHIWQADGITSCFPRGTDRLEKALEKRDTPGYKYISKVYAWTLVRSSIMRRSLRLDVDGVMSNYPDRVVGVLQEKEFANKFRLATYADNPWEKFMRI.

The active site involves His5. 2 residues coordinate Mg(2+): Glu25 and Asp27. His41 (nucleophile) is an active-site residue. Intrachain disulfides connect Cys45-Cys51 and Cys47-Cys190. Mg(2+) is bound at residue Asp85.

It belongs to the arthropod phospholipase D family. Class II subfamily. Mg(2+) is required as a cofactor. In terms of tissue distribution, expressed by the venom gland.

It is found in the secreted. It catalyses the reaction an N-(acyl)-sphingosylphosphocholine = an N-(acyl)-sphingosyl-1,3-cyclic phosphate + choline. The enzyme catalyses an N-(acyl)-sphingosylphosphoethanolamine = an N-(acyl)-sphingosyl-1,3-cyclic phosphate + ethanolamine. The catalysed reaction is a 1-acyl-sn-glycero-3-phosphocholine = a 1-acyl-sn-glycero-2,3-cyclic phosphate + choline. It carries out the reaction a 1-acyl-sn-glycero-3-phosphoethanolamine = a 1-acyl-sn-glycero-2,3-cyclic phosphate + ethanolamine. Dermonecrotic toxins cleave the phosphodiester linkage between the phosphate and headgroup of certain phospholipids (sphingolipid and lysolipid substrates), forming an alcohol (often choline) and a cyclic phosphate. This toxin acts on sphingomyelin (SM). It may also act on ceramide phosphoethanolamine (CPE), lysophosphatidylcholine (LPC) and lysophosphatidylethanolamine (LPE), but not on lysophosphatidylserine (LPS), and lysophosphatidylglycerol (LPG). It acts by transphosphatidylation, releasing exclusively cyclic phosphate products as second products. Induces dermonecrosis, hemolysis, increased vascular permeability, edema, inflammatory response, and platelet aggregation. The chain is Dermonecrotic toxin SpaSicTox-betaIIA3 from Sicarius patagonicus (Six-eyed sand spider).